Consider the following 187-residue polypeptide: RNA pyrophosphohydrolase (187 aa).

Residues 6–149 (GYRANVGIIL…KRQVYRLALT (144 aa)) enclose the Nudix hydrolase domain. The short motif at 38 to 59 (GGIKSGETPTQAMYRELAEETG) is the Nudix box element.

Belongs to the Nudix hydrolase family. RppH subfamily. A divalent metal cation serves as cofactor.

Functionally, accelerates the degradation of transcripts by removing pyrophosphate from the 5'-end of triphosphorylated RNA, leading to a more labile monophosphorylated state that can stimulate subsequent ribonuclease cleavage. The protein is RNA pyrophosphohydrolase of Nitrosomonas eutropha (strain DSM 101675 / C91 / Nm57).